The chain runs to 727 residues: Glucans biosynthesis glucosyltransferase H (727 aa).

Positions serine 18–threonine 45 are disordered. The next 7 helical transmembrane spans lie at phenylalanine 58 to valine 78, leucine 90 to isoleucine 110, leucine 278 to valine 298, isoleucine 408 to alanine 428, leucine 460 to leucine 480, isoleucine 496 to isoleucine 516, and leucine 572 to tryptophan 592.

The protein belongs to the glycosyltransferase 2 family. OpgH subfamily.

Its subcellular location is the cell inner membrane. It participates in glycan metabolism; osmoregulated periplasmic glucan (OPG) biosynthesis. In terms of biological role, involved in the biosynthesis of osmoregulated periplasmic glucans (OPGs). The sequence is that of Glucans biosynthesis glucosyltransferase H from Shewanella putrefaciens (strain CN-32 / ATCC BAA-453).